Here is a 123-residue protein sequence, read N- to C-terminus: MAQLPSAQMPAPRTQPDLILVHPVLALSGRAPSILCSVPWDACELLATAMWWKTRILWGVFLISRTRPPAPMQILILTLDPSEGEVCCKKRKPGQTGRNRVRMTTATCKPGGEASGETSPGTP.

This is an uncharacterized protein from Homo sapiens (Human).